Consider the following 220-residue polypeptide: Endonuclease NucS (220 aa).

The protein belongs to the NucS endonuclease family.

The protein localises to the cytoplasm. In terms of biological role, cleaves both 3' and 5' ssDNA extremities of branched DNA structures. In Mycobacterium leprae (strain TN), this protein is Endonuclease NucS.